Consider the following 299-residue polypeptide: 4-sulfomuconolactone hydrolase (299 aa).

It belongs to the metallo-dependent hydrolases superfamily. Sulfomuconolactone hydrolase family. Monomer. Zn(2+) is required as a cofactor.

The enzyme catalyses 4-sulfomuconolactone + H2O = maleylacetate + sulfite + 2 H(+). Functionally, involved in the degradation of 4-sulfocatechol which is a central intermediate in the degradation of substituted sulfonated benzenes. Catalyzes the hydrolytical desulfonation of 4-sulfomuconolactone to yield maleylacetate. This Rhizobium radiobacter (Agrobacterium tumefaciens) protein is 4-sulfomuconolactone hydrolase.